The sequence spans 2176 residues: Protein eyes shut (2176 aa).

Residues 1–122 lie on the Cytoplasmic side of the membrane; sequence MSNVHQFDTQ…NPNILLPTLR (122 aa). The helical transmembrane segment at 123 to 143 threads the bilayer; sequence ILARGLLLPALILAILVGSSQ. Positions 144–180 constitute an EGF-like 1 domain; it reads AGFACLSNPCVFGVCIDGLNSSYSCYCIDGYTGIQCQ. The Extracellular portion of the chain corresponds to 144–2176; that stretch reads AGFACLSNPC…DLHGDEPLTV (2033 aa). 21 disulfide bridges follow: C148/C158, C153/C168, C170/C179, C186/C197, C191/C206, C208/C217, C224/C235, C229/C244, C246/C255, C262/C276, C270/C286, C288/C297, C304/C315, C309/C324, C326/C335, C342/C353, C347/C362, C364/C373, C380/C392, C386/C401, and C403/C412. An N-linked (GlcNAc...) asparagine glycan is attached at N163. The 37-residue stretch at 182–218 folds into the EGF-like 2; calcium-binding domain; that stretch reads NWDECWSSPCQNGGTCVDGVAYYNCTCPEGFSGSNCE. Residue N205 is glycosylated (N-linked (GlcNAc...) asparagine). In terms of domain architecture, EGF-like 3; calcium-binding spans 220–256; that stretch reads NVDECMSNPCQNGGLCRDRTNGYICTCQPGYLGSHCE. The region spanning 258–298 is the EGF-like 4 domain; sequence DVAVCETGTGARCQHGGECIEGPGLEFTCDCPAGWHGRICQ. In terms of domain architecture, EGF-like 5; calcium-binding spans 300 to 336; the sequence is EINECASSPCQNGGVCVDKLAAYACACPMGYTGINCE. The EGF-like 6 domain occupies 338 to 374; that stretch reads EILICADNPCQNNALCLMEEGVPTCYCVPDYHGEKCE. Residues 376–413 enclose the EGF-like 7; calcium-binding domain; sequence QYDECQLGPRCMNGGVCIDGVDTFSCSCPPLLTGMLCE. A glycan (N-linked (GlcNAc...) asparagine) is linked at N425. Composition is skewed to low complexity over residues 429–447 and 482–502; these read PATQSPPRRTTTTSTMAPP and VTSVLSPSSSSSSSEEGVSVE. Disordered stretches follow at residues 429-465, 482-639, 757-783, 802-854, and 902-1014; these read PATQSPPRRTTTTSTMAPPTVRPVTPPETTVSPSRAS, VTSV…RPTA, RFTTVQPPAGVTTTSPTEDSSVELPTP, LITT…VEIT, and APPA…GVPE. The segment covering 514-526 has biased composition (polar residues); it reads GSHSISVEQTTAV. The span at 548-560 shows a compositional bias: acidic residues; the sequence is SASESETETEEEI. Composition is skewed to low complexity over residues 564 to 582 and 596 to 632; these read TTARPPTSRSSSSSEESPS and TSASSESSGEVVTSEEYTTVPHFEVSGSKSESGSEEV. A compositionally biased stretch (polar residues) spans 757 to 775; sequence RFTTVQPPAGVTTTSPTED. Positions 811 to 820 are enriched in basic residues; the sequence is THHHHHHHPH. Pro residues-rich tracts occupy residues 904-922 and 930-955; these read PATPAPVPPATTTPPPSPP and TLPPTLPPVTLPPVTQPPPTIPPTPP. The EGF-like 8 domain occupies 1018–1054; sequence GDVDCIKLGCYNGGTCVTTSEGSRCVCRFDRQGPLCE. 3 disulfide bridges follow: C1022/C1033, C1027/C1042, and C1044/C1053. Residues 1059-1266 enclose the Laminin G-like 1 domain; that stretch reads IRNAAFSGDS…GITECGSLAC (208 aa). 3 N-linked (GlcNAc...) asparagine glycosylation sites follow: N1165, N1170, and N1176. In terms of domain architecture, EGF-like 9 spans 1309–1346; sequence EISVCEDNPCQYGGTCVQFPGSGYLCLCPLGKHGHYCE. Cystine bridges form between C1313-C1324, C1318-C1334, and C1336-C1345. Positions 1353-1549 constitute a Laminin G-like 2 domain; sequence LPSFSGSVNG…GVGQCGTREC (197 aa). N1471 is a glycosylation site (N-linked (GlcNAc...) asparagine). EGF-like domains are found at residues 1545-1581 and 1583-1621; these read GTRECHRHACQHDGACLQHGATFTCICQEGWYGPLCA and PTNPCDSFNNKCYEDATCVPLVNGYECDCPVGRTGKNCE. Intrachain disulfides connect C1549-C1560, C1554-C1569, C1571-C1580, C1587-C1600, C1594-C1609, and C1611-C1620. N-linked (GlcNAc...) asparagine glycans are attached at residues N1665 and N1861. The 188-residue stretch at 1692–1879 folds into the Laminin G-like 3 domain; sequence EKQRSFSPVP…NIRDCDGTAC (188 aa). EGF-like domains follow at residues 1875–1912 and 1913–1946; these read DGTACGGDSCESGGHCWLDEKLQPHCICPEYAKGDRCE and YSETCKLIPCKNNGRCLRSGRCSCPNGWGGFYCE. Intrachain disulfides connect C1879-C1890, C1884-C1900, C1902-C1911, C1917-C1928, C1922-C1934, and C1936-C1945. The 215-residue stretch at 1952–2166 folds into the Laminin G-like 4 domain; sequence PTTPSFRGNS…TYQGENIGSC (215 aa). N-linked (GlcNAc...) asparagine glycosylation is found at N1994, N2035, and N2099. Positions 2080–2101 are disordered; the sequence is GGRSLGSTTPRSTLAGRRKNSS.

The protein belongs to the EYS family. Expressed from the beginning of rhabdomere biogenesis (48 hours after pupal formation), when it decorates the entire photoreceptor apical surface.

It is found in the membrane. Its subcellular location is the secreted. Functionally, essential for the formation of matrix-filled interrhabdomeral space: critical for the formation of epithelial lumina in the retina. Acts together with prominin (prom) and the cell adhesion molecule chaoptin (chp) to choreograph the partitioning of rhabdomeres into an open system. The sequence is that of Protein eyes shut from Drosophila melanogaster (Fruit fly).